Here is a 161-residue protein sequence, read N- to C-terminus: Cap-associated protein CAF20 (161 aa).

Over residues 52–72 the composition is skewed to basic residues; sequence HFGRRRSSHHHGRPKIKHNKP. A disordered region spans residues 52-108; the sequence is HFGRRRSSHHHGRPKIKHNKPKVTTDSDGWCTFEAKKKGSGEDDEEETETTPTSTVP. Phosphoserine occurs at positions 78 and 91. 3 positions are modified to phosphothreonine: T99, T101, and T102. Residue S154 is modified to Phosphoserine.

The protein belongs to the CAF20 family. In terms of assembly, interacts with TIF45. In terms of processing, phosphorylated by casein kinase II complex (CK2).

The protein localises to the cytoplasm. Functionally, acts as an inhibitor of cap-dependent translation. Competes with eIF4G1/TIF4631 and EAP1 for binding to eIF4E/TIF45 and interferes with the formation of the eIF4F complex, inhibiting translation and stabilizing mRNA. Binding affinity for eIF4E/TIF45 is 10-fold less than that of eIF4G1/TIF4631. Required for induction of pseudohyphal growth in response to nitrogen limitation, probably by regulating STE12 translation. This is Cap-associated protein CAF20 (CAF20) from Saccharomyces cerevisiae (strain ATCC 204508 / S288c) (Baker's yeast).